Here is a 426-residue protein sequence, read N- to C-terminus: Crinkler effector protein 4 (426 aa).

Positions 20–57 are LQLFLAK domain; sequence VEIDDSAKVSKLKKVIKEENPATITCDAKDLQLFLAKK. The segment at 59–107 is DWL domain; it reads DAWLDGAGAAAVELDEHGHPQGCVQMDPTLWVKNPKHFGDNFQPGEGQV. The HVLVXXP motif motif lies at 108–114; that stretch reads HVLVVVP. Positions 115-426 are effector domain; the sequence is EGVVGSASET…RSIPTLSYFS (312 aa).

Belongs to the Crinkler effector family.

It localises to the secreted. The protein localises to the host nucleus. Functionally, secreted effector that is critical to pathogenesis by suppressing plant immune responsess. Promotes Phytophthora infection by suppressing the H(2)O(2) accumulation and callose deposition. May induce cell death by regulating expression of cell death-related genes. The polypeptide is Crinkler effector protein 4 (Phytophthora capsici).